A 1373-amino-acid chain; its full sequence is DNA-directed RNA polymerase subunit beta (1373 aa).

It belongs to the RNA polymerase beta chain family. The RNAP catalytic core consists of 2 alpha, 1 beta, 1 beta' and 1 omega subunit. When a sigma factor is associated with the core the holoenzyme is formed, which can initiate transcription.

The enzyme catalyses RNA(n) + a ribonucleoside 5'-triphosphate = RNA(n+1) + diphosphate. DNA-dependent RNA polymerase catalyzes the transcription of DNA into RNA using the four ribonucleoside triphosphates as substrates. This Rickettsia rickettsii (strain Iowa) protein is DNA-directed RNA polymerase subunit beta.